Here is a 128-residue protein sequence, read N- to C-terminus: Aspartate 1-decarboxylase (128 aa).

Ser-25 (schiff-base intermediate with substrate; via pyruvic acid) is an active-site residue. Residue Ser-25 is modified to Pyruvic acid (Ser). Thr-57 contacts substrate. Residue Tyr-58 is the Proton donor of the active site. Gly-73–Ala-75 serves as a coordination point for substrate.

This sequence belongs to the PanD family. As to quaternary structure, heterooctamer of four alpha and four beta subunits. The cofactor is pyruvate. Is synthesized initially as an inactive proenzyme, which is activated by self-cleavage at a specific serine bond to produce a beta-subunit with a hydroxyl group at its C-terminus and an alpha-subunit with a pyruvoyl group at its N-terminus.

The protein resides in the cytoplasm. It carries out the reaction L-aspartate + H(+) = beta-alanine + CO2. It functions in the pathway cofactor biosynthesis; (R)-pantothenate biosynthesis; beta-alanine from L-aspartate: step 1/1. Catalyzes the pyruvoyl-dependent decarboxylation of aspartate to produce beta-alanine. In Burkholderia lata (strain ATCC 17760 / DSM 23089 / LMG 22485 / NCIMB 9086 / R18194 / 383), this protein is Aspartate 1-decarboxylase.